A 288-amino-acid chain; its full sequence is tRNA dimethylallyltransferase (288 aa).

17–24 (GPTASGKS) contacts ATP. 19 to 24 (TASGKS) contributes to the substrate binding site.

Belongs to the IPP transferase family. In terms of assembly, monomer. Mg(2+) serves as cofactor.

The catalysed reaction is adenosine(37) in tRNA + dimethylallyl diphosphate = N(6)-dimethylallyladenosine(37) in tRNA + diphosphate. Functionally, catalyzes the transfer of a dimethylallyl group onto the adenine at position 37 in tRNAs that read codons beginning with uridine, leading to the formation of N6-(dimethylallyl)adenosine (i(6)A). The protein is tRNA dimethylallyltransferase of Ruegeria sp. (strain TM1040) (Silicibacter sp.).